Consider the following 251-residue polypeptide: Imidazole glycerol phosphate synthase subunit HisF (251 aa).

Catalysis depends on residues Asp11 and Asp130.

The protein belongs to the HisA/HisF family. In terms of assembly, heterodimer of HisH and HisF.

It localises to the cytoplasm. It catalyses the reaction 5-[(5-phospho-1-deoxy-D-ribulos-1-ylimino)methylamino]-1-(5-phospho-beta-D-ribosyl)imidazole-4-carboxamide + L-glutamine = D-erythro-1-(imidazol-4-yl)glycerol 3-phosphate + 5-amino-1-(5-phospho-beta-D-ribosyl)imidazole-4-carboxamide + L-glutamate + H(+). The protein operates within amino-acid biosynthesis; L-histidine biosynthesis; L-histidine from 5-phospho-alpha-D-ribose 1-diphosphate: step 5/9. IGPS catalyzes the conversion of PRFAR and glutamine to IGP, AICAR and glutamate. The HisF subunit catalyzes the cyclization activity that produces IGP and AICAR from PRFAR using the ammonia provided by the HisH subunit. The polypeptide is Imidazole glycerol phosphate synthase subunit HisF (Listeria welshimeri serovar 6b (strain ATCC 35897 / DSM 20650 / CCUG 15529 / CIP 8149 / NCTC 11857 / SLCC 5334 / V8)).